Consider the following 728-residue polypeptide: Catalase-peroxidase 1 (728 aa).

A signal peptide spans 1-22 (MDKTQSSQGKCPVMHGANSAVA). Positions 97–225 (WHSAGTYRVA…LAAVMMGLIY (129 aa)) form a cross-link, tryptophyl-tyrosyl-methioninium (Trp-Tyr) (with M-251). His-98 acts as the Proton acceptor in catalysis. Positions 225–251 (YVNPEGVDGKPDPLRTAQDVRVTFARM) form a cross-link, tryptophyl-tyrosyl-methioninium (Tyr-Met) (with W-97). A heme b-binding site is contributed by His-266.

Belongs to the peroxidase family. Peroxidase/catalase subfamily. Homodimer or homotetramer. It depends on heme b as a cofactor. Post-translationally, formation of the three residue Trp-Tyr-Met cross-link is important for the catalase, but not the peroxidase activity of the enzyme.

The enzyme catalyses H2O2 + AH2 = A + 2 H2O. It carries out the reaction 2 H2O2 = O2 + 2 H2O. Its function is as follows. Bifunctional enzyme with both catalase and broad-spectrum peroxidase activity. The polypeptide is Catalase-peroxidase 1 (Shewanella sp. (strain ANA-3)).